The chain runs to 325 residues: Acetyl-coenzyme A carboxylase carboxyl transferase subunit alpha (325 aa).

Residues R38–S292 form the CoA carboxyltransferase C-terminal domain.

It belongs to the AccA family. In terms of assembly, acetyl-CoA carboxylase is a heterohexamer composed of biotin carboxyl carrier protein (AccB), biotin carboxylase (AccC) and two subunits each of ACCase subunit alpha (AccA) and ACCase subunit beta (AccD).

It is found in the cytoplasm. The enzyme catalyses N(6)-carboxybiotinyl-L-lysyl-[protein] + acetyl-CoA = N(6)-biotinyl-L-lysyl-[protein] + malonyl-CoA. It participates in lipid metabolism; malonyl-CoA biosynthesis; malonyl-CoA from acetyl-CoA: step 1/1. Its function is as follows. Component of the acetyl coenzyme A carboxylase (ACC) complex. First, biotin carboxylase catalyzes the carboxylation of biotin on its carrier protein (BCCP) and then the CO(2) group is transferred by the carboxyltransferase to acetyl-CoA to form malonyl-CoA. The protein is Acetyl-coenzyme A carboxylase carboxyl transferase subunit alpha of Bacillus velezensis (strain DSM 23117 / BGSC 10A6 / LMG 26770 / FZB42) (Bacillus amyloliquefaciens subsp. plantarum).